A 315-amino-acid chain; its full sequence is uncharacterized protein (315 aa).

Over residues 1–23 (MSNTDALNTANTQITENVDTSSM) the composition is skewed to polar residues. Positions 1-31 (MSNTDALNTANTQITENVDTSSMKVEKTHDS) are disordered.

This is an uncharacterized protein from Acanthamoeba polyphaga mimivirus (APMV).